A 479-amino-acid polypeptide reads, in one-letter code: Adenosylhomocysteinase (479 aa).

T56, D133, and E199 together coordinate substrate. An NAD(+)-binding site is contributed by 200 to 202 (TTT). K229 and D233 together coordinate substrate. Residues N234, 263–268 (GYGDVG), E286, N321, 342–344 (IGH), and N390 each bind NAD(+).

The protein belongs to the adenosylhomocysteinase family. Homotetramer. It depends on NAD(+) as a cofactor.

It catalyses the reaction S-adenosyl-L-homocysteine + H2O = L-homocysteine + adenosine. Its pathway is amino-acid biosynthesis; L-homocysteine biosynthesis; L-homocysteine from S-adenosyl-L-homocysteine: step 1/1. Functionally, adenosylhomocysteine is a competitive inhibitor of S-adenosyl-L-methionine-dependent methyl transferase reactions; therefore adenosylhomocysteinase may play a key role in the control of methylations via regulation of the intracellular concentration of adenosylhomocysteine. This chain is Adenosylhomocysteinase, found in Plasmodium chabaudi chabaudi.